The sequence spans 219 residues: Adenylate kinase (219 aa).

10-15 (GAGKGT) lines the ATP pocket. The NMP stretch occupies residues 30-59 (STGDMLRAAIREGTELGLKAKSVMESGGLV). Residues threonine 31, arginine 36, 57 to 59 (GLV), 85 to 88 (GFPR), and glutamine 92 contribute to the AMP site. Residues 122-159 (GRRQHPASGRVYHIEYNPPKVEGKDDVTGEELVQRPDD) are LID. ATP is bound by residues arginine 123 and 132-133 (VY). Arginine 156 and arginine 167 together coordinate AMP. Arginine 202 is a binding site for ATP.

This sequence belongs to the adenylate kinase family. In terms of assembly, monomer.

It is found in the cytoplasm. It catalyses the reaction AMP + ATP = 2 ADP. It functions in the pathway purine metabolism; AMP biosynthesis via salvage pathway; AMP from ADP: step 1/1. Catalyzes the reversible transfer of the terminal phosphate group between ATP and AMP. Plays an important role in cellular energy homeostasis and in adenine nucleotide metabolism. In Acinetobacter baylyi (strain ATCC 33305 / BD413 / ADP1), this protein is Adenylate kinase.